The chain runs to 324 residues: MSSTTVRPSVNALATPLVEALVADAAKLRLSVSAKSGEARLVDAGAQARGSIEAGRRIAEICLGGLGTVTIAPAGPVAAWPVTVTVHSADPVLACLGSQYAGWSLADEGGSSGFFALGSGPGRAAAAAEHLFEELHYRDHAAQIALVLESASAPPASVVAKVAEAAGVTPDAVTFIYAPTQSLAGATQVVARVLEVALHKAHSVGFDLAKVVDGIGAAPLSPPHPDFIQAMGRTNDAIIYGGRVQLFVEADDAEARGLAEALPSTTSRDHGAPFAEIFARFNGDFYAIDKHLFSPAEVVVTSLLSGTSHRAGRLVPELVERSFA.

It belongs to the MCH family.

It localises to the cytoplasm. It catalyses the reaction 5,10-methenyl-5,6,7,8-tetrahydromethanopterin + H2O = N(5)-formyl-5,6,7,8-tetrahydromethanopterin + H(+). It participates in one-carbon metabolism; formaldehyde degradation; formate from formaldehyde (H(4)MPT route): step 3/5. In terms of biological role, catalyzes the hydrolysis of methenyl-H(4)MPT(+) to 5-formyl-H(4)MPT. The polypeptide is Methenyltetrahydromethanopterin cyclohydrolase (Methylobacterium sp. (strain 4-46)).